The sequence spans 339 residues: DNA-directed RNA polymerase RPB7 homolog (339 aa).

The protein belongs to the Asfivirus DNA-directed RNA polymerase RPB7 homolog family. In terms of assembly, part of the viral DNA-directed RNA polymerase that consists of 8 polII-like subunits (RPB1, RPB2, RPB3, RPB5, RPB6, RPB7, RPB9, RPB10), a capping enzyme and a termination factor.

The protein resides in the host cytoplasm. It localises to the virion. Its function is as follows. Component of the DNA-directed RNA polymerase (RNAP) that catalyzes the transcription in the cytoplasm of viral DNA into RNA using the four ribonucleoside triphosphates as substrates. The protein is DNA-directed RNA polymerase RPB7 homolog of African swine fever virus (strain Badajoz 1971 Vero-adapted) (Ba71V).